Here is a 464-residue protein sequence, read N- to C-terminus: GDNF family receptor alpha-2 (464 aa).

Positions 1-21 (MILANVFCLFFFLDETLRSLA) are cleaved as a signal peptide. 11 disulfide bridges follow: cysteine 40–cysteine 93, cysteine 95–cysteine 105, cysteine 161–cysteine 222, cysteine 168–cysteine 174, cysteine 185–cysteine 200, cysteine 195–cysteine 241, cysteine 224–cysteine 229, cysteine 251–cysteine 323, cysteine 258–cysteine 264, cysteine 275–cysteine 293, and cysteine 285–cysteine 347. N-linked (GlcNAc...) asparagine glycosylation is present at asparagine 52. The N-linked (GlcNAc...) asparagine glycan is linked to asparagine 357. Residues 363-392 (VSPKGPSFQATQAPRVEKTPSLPDDLSDST) are disordered. The span at 381–392 (TPSLPDDLSDST) shows a compositional bias: low complexity. Asparagine 413 is a glycosylation site (N-linked (GlcNAc...) asparagine). Serine 444 carries GPI-anchor amidated serine lipidation. Positions 445–464 (RARPSAALTVLSVLMLKLAL) are cleaved as a propeptide — removed in mature form.

The protein belongs to the GDNFR family. Interacts with NRTN ligand and RET: forms a 2:2:2 ternary complex composed of NRTN ligand, GFRA2 and RET receptor. Also forms a 4:4:4 tetrameric complex composed of 4 copies of NRTN ligand, GFRA2 and RET receptor, which prevents endocytosis of RET. Interacts with SORL1. In terms of tissue distribution, found in both brain and placenta.

The protein resides in the cell membrane. Receptor for neurturin (NRTN), a growth factor that supports the survival of sympathetic neurons. NRTN-binding leads to autophosphorylation and activation of the RET receptor. Also able to mediate GDNF signaling through the RET tyrosine kinase receptor. Functionally, participates in NRTN-induced 'Ser-727' phosphorylation of STAT3. The sequence is that of GDNF family receptor alpha-2 (GFRA2) from Homo sapiens (Human).